A 53-amino-acid polypeptide reads, in one-letter code: UPF0391 membrane protein SG0393 (53 aa).

Transmembrane regions (helical) follow at residues 4 to 24 (WGIIFLVIALIAAALGFGGLA) and 27 to 47 (AAWAAKIVFVVGIILFLISLF).

The protein belongs to the UPF0391 family.

The protein resides in the cell membrane. The polypeptide is UPF0391 membrane protein SG0393 (Sodalis glossinidius (strain morsitans)).